Here is a 199-residue protein sequence, read N- to C-terminus: Peroxiredoxin-1 (199 aa).

S2 is subject to N-acetylserine. The Thioredoxin domain maps to 6-165; that stretch reads AKIGHRAPQF…TLRLVQAFQF (160 aa). An N6-acetyllysine; alternate modification is found at K7. A Glycyl lysine isopeptide (Lys-Gly) (interchain with G-Cter in SUMO2); alternate cross-link involves residue K7. N6-acetyllysine occurs at positions 16 and 27. N6-acetyllysine; alternate is present on K35. K35 is subject to N6-succinyllysine; alternate. C52 functions as the Cysteine sulfenic acid (-SOH) intermediate in the catalytic mechanism. Position 90 is a phosphothreonine (T90). K120 is covalently cross-linked (Glycyl lysine isopeptide (Lys-Gly) (interchain with G-Cter in SUMO2)). K136 is modified (N6-acetyllysine). Residues 176-199 are disordered; the sequence is GWKPGSDTIKPDVQKSKEYFSKQK. Positions 184–199 are enriched in basic and acidic residues; the sequence is IKPDVQKSKEYFSKQK. A Glycyl lysine isopeptide (Lys-Gly) (interchain with G-Cter in SUMO1) cross-link involves residue K185. Position 197 is an N6-acetyllysine (K197).

This sequence belongs to the peroxiredoxin family. AhpC/Prx1 subfamily. Homodimer; disulfide-linked, upon oxidation. 5 homodimers assemble to form a ring-like decamer. Interacts with GDPD5; forms a mixed-disulfide with GDPD5. Interacts with SESN1 and SESN2. Interacts with FAM107A. Post-translationally, phosphorylated on Thr-90 during the M-phase, which leads to a decrease in enzymatic activity. Acetylation increases reducing activity and resistance to superoxidation. Deacetylated by HDAC6 which decreases reducing activity.

The protein resides in the cytoplasm. It carries out the reaction a hydroperoxide + [thioredoxin]-dithiol = an alcohol + [thioredoxin]-disulfide + H2O. Functionally, thiol-specific peroxidase that catalyzes the reduction of hydrogen peroxide and organic hydroperoxides to water and alcohols, respectively. Plays a role in cell protection against oxidative stress by detoxifying peroxides and as sensor of hydrogen peroxide-mediated signaling events. Might participate in the signaling cascades of growth factors and tumor necrosis factor-alpha by regulating the intracellular concentrations of H(2)O(2). Reduces an intramolecular disulfide bond in GDPD5 that gates the ability to GDPD5 to drive postmitotic motor neuron differentiation. In Bos taurus (Bovine), this protein is Peroxiredoxin-1 (PRDX1).